The sequence spans 122 residues: Large ribosomal subunit protein uL14 (122 aa).

This sequence belongs to the universal ribosomal protein uL14 family. In terms of assembly, part of the 50S ribosomal subunit. Forms a cluster with proteins L3 and L19. In the 70S ribosome, L14 and L19 interact and together make contacts with the 16S rRNA in bridges B5 and B8.

In terms of biological role, binds to 23S rRNA. Forms part of two intersubunit bridges in the 70S ribosome. This chain is Large ribosomal subunit protein uL14, found in Citrifermentans bemidjiense (strain ATCC BAA-1014 / DSM 16622 / JCM 12645 / Bem) (Geobacter bemidjiensis).